The primary structure comprises 401 residues: Dynactin subunit 2 (401 aa).

Residues 1–25 (MADPKYADLPGIARNEPDVYETSDL) form a disordered region. Ala-2 carries the post-translational modification N-acetylalanine. The residue at position 6 (Tyr-6) is a Phosphotyrosine. Ser-83 carries the phosphoserine modification. The residue at position 86 (Tyr-86) is a Phosphotyrosine. Residues 99–132 (PQQKYQRLLHEVQELTTEVEKIKTTVKESATEEK) are a coiled coil. Phosphothreonine occurs at positions 134 and 198. Residues 214–244 (EQDKFSQAAKVAELEKRLTELETAVRCDQDA) are a coiled coil. Ser-320 carries the phosphoserine modification. The stretch at 379–399 (RENLATVEGNFASIDERMKKL) forms a coiled coil.

Belongs to the dynactin subunit 2 family. As to quaternary structure, subunit of dynactin, a multiprotein complex part of a tripartite complex with dynein and a adapter, such as BICDL1, BICD2 or HOOK3. The dynactin complex is built around ACTR1A/ACTB filament and consists of an actin-related filament composed of a shoulder domain, a pointed end and a barbed end. Its length is defined by its flexible shoulder domain. The soulder is composed of 2 DCTN1 subunits, 4 DCTN2 and 2 DCTN3. The 4 DCNT2 (via N-terminus) bind the ACTR1A filament and act as molecular rulers to determine the length. The pointed end is important for binding dynein-dynactin cargo adapters and consists of 4 subunits: ACTR10, DCNT4, DCTN5 and DCTN6. The barbed end is composed of a CAPZA1:CAPZB heterodimers, which binds ACTR1A/ACTB filament and dynactin and stabilizes dynactin. Interacts with BICD2 and CEP135. Interacts with DYNAP. Interacts with ECPAS. Interacts with MAPRE1.

It is found in the cytoplasm. Its subcellular location is the cytoskeleton. The protein resides in the microtubule organizing center. It localises to the centrosome. The protein localises to the membrane. Functionally, part of the dynactin complex that activates the molecular motor dynein for ultra-processive transport along microtubules. In the dynactin soulder domain, binds the ACTR1A filament and acts as a molecular ruler to determine the length. Modulates cytoplasmic dynein binding to an organelle, and plays a role in prometaphase chromosome alignment and spindle organization during mitosis. Involved in anchoring microtubules to centrosomes. May play a role in synapse formation during brain development. This Homo sapiens (Human) protein is Dynactin subunit 2.